Here is a 238-residue protein sequence, read N- to C-terminus: Zinc import ATP-binding protein ZnuC (238 aa).

The 216-residue stretch at 5 to 220 (IQLNNISVNF…SEFIAIFGNI (216 aa)) folds into the ABC transporter domain. 37–44 (GPNGAGKS) contributes to the ATP binding site.

The protein belongs to the ABC transporter superfamily. Zinc importer (TC 3.A.1.15.5) family. In terms of assembly, the complex is composed of two ATP-binding proteins (ZnuC), two transmembrane proteins (ZnuB) and a solute-binding protein (ZnuA).

It is found in the cell membrane. The enzyme catalyses Zn(2+)(out) + ATP(in) + H2O(in) = Zn(2+)(in) + ADP(in) + phosphate(in) + H(+)(in). Part of the ABC transporter complex ZnuABC involved in zinc import. Responsible for energy coupling to the transport system. The sequence is that of Zinc import ATP-binding protein ZnuC from Buchnera aphidicola subsp. Baizongia pistaciae (strain Bp).